We begin with the raw amino-acid sequence, 167 residues long: Cytochrome b6-f complex subunit 4 (167 aa).

A run of 3 helical transmembrane segments spans residues 36–56 (LLYI…GLAV), 95–115 (LLGV…PFLE), and 131–151 (TVFL…TLPI).

Belongs to the cytochrome b family. PetD subfamily. The 4 large subunits of the cytochrome b6-f complex are cytochrome b6, subunit IV (17 kDa polypeptide, petD), cytochrome f and the Rieske protein, while the 4 small subunits are petG, petL, petM and petN. The complex functions as a dimer.

The protein localises to the plastid. Its subcellular location is the chloroplast thylakoid membrane. Component of the cytochrome b6-f complex, which mediates electron transfer between photosystem II (PSII) and photosystem I (PSI), cyclic electron flow around PSI, and state transitions. The polypeptide is Cytochrome b6-f complex subunit 4 (Calycanthus floridus var. glaucus (Eastern sweetshrub)).